We begin with the raw amino-acid sequence, 372 residues long: Probable arabinan endo-1,5-alpha-L-arabinosidase B (372 aa).

The signal sequence occupies residues 1 to 16; it reads MTVLVALFCLVTWTLC. The segment covering 23–34 has biased composition (low complexity); that stretch reads STQGTQQPQQPE. Residues 23–52 form a disordered region; that stretch reads STQGTQQPQQPEKTPHPHPQPEDAFPPTHA. The active-site Proton acceptor is the D59. N-linked (GlcNAc...) asparagine glycosylation occurs at N120. The active-site Proton donor is E252. N363 is a glycosylation site (N-linked (GlcNAc...) asparagine).

The protein belongs to the glycosyl hydrolase 43 family.

Its subcellular location is the secreted. It carries out the reaction Endohydrolysis of (1-&gt;5)-alpha-arabinofuranosidic linkages in (1-&gt;5)-arabinans.. It participates in glycan metabolism; L-arabinan degradation. Functionally, endo-1,5-alpha-L-arabinanase involved in degradation of pectin. Its preferred substrate is linear 1,5-alpha-L-arabinan. This Aspergillus fumigatus (strain ATCC MYA-4609 / CBS 101355 / FGSC A1100 / Af293) (Neosartorya fumigata) protein is Probable arabinan endo-1,5-alpha-L-arabinosidase B (abnB).